A 512-amino-acid polypeptide reads, in one-letter code: Cytochrome P450 monooxygenase pbrB (512 aa).

A helical membrane pass occupies residues 6–29; it reads LSFPAAVGAAFGAFAIYVVARCIY. C452 contacts heme.

This sequence belongs to the cytochrome P450 family. Requires heme as cofactor.

The protein resides in the membrane. Its pathway is secondary metabolite biosynthesis; terpenoid biosynthesis. In terms of biological role, cytochrome P450 monooxygenase; part of the gene cluster that mediates the biosynthesis of the sesquiterpenoid aspterric acid (AA), an inhibitor of dihydroxy-acid dehydratase (DHAD) effective as an herbicide. PbrB catalyzes the second step within the pathway and converts (-)-daucane produced by the terpene cyclase pbrA into an alpha-epoxy carboxylate intermediate which is further converted into the tricyclic aspterric acid by the cytochrome P450 monooxygenase pbrC. The polypeptide is Cytochrome P450 monooxygenase pbrB (Penicillium brasilianum).